The following is a 995-amino-acid chain: tRNA wybutosine-synthesizing protein 2/3/4 (995 aa).

A tRNA wybutosine-synthesizing protein 3 homolog region spans residues 1-212 (MDFEKRKAAT…GFSVALASNG (212 aa)). Kelch repeat units follow at residues 284–335 (EVIV…MVGD), 336–386 (FMFV…SVGT), 387–436 (KVYI…AYGS), 437–486 (QSFM…VYKH), and 488–535 (IGII…SILG). Residues 661–995 (ERSEENNLTK…RHLVADVRCR (335 aa)) are tRNA wybutosine-synthesizing protein 2 homolog. Residues K828 and 896 to 897 (DN) each bind S-adenosyl-L-methionine.

The protein in the C-terminal section; belongs to the class I-like SAM-binding methyltransferase superfamily. TRM5/TYW2 family. This sequence in the N-terminal section; belongs to the TYW3 family.

It carries out the reaction 4-demethyl-7-[(3S)-3-amino-3-carboxypropyl]wyosine(37) in tRNA(Phe) + S-adenosyl-L-methionine = 7-[(3S)-3-amino-3-carboxypropyl]wyosine(37) in tRNA(Phe) + S-adenosyl-L-homocysteine + H(+). The enzyme catalyses 4-demethylwyosine(37) in tRNA(Phe) + S-adenosyl-L-methionine = 4-demethyl-7-[(3S)-3-amino-3-carboxypropyl]wyosine(37) in tRNA(Phe) + S-methyl-5'-thioadenosine + H(+). It participates in tRNA modification; wybutosine-tRNA(Phe) biosynthesis. In terms of biological role, S-adenosyl-L-methionine-dependent transferase that acts as a component of the wybutosine biosynthesis pathway. Wybutosine is a hyper modified guanosine with a tricyclic base found at the 3'-position adjacent to the anticodon of eukaryotic phenylalanine tRNA. This Arabidopsis thaliana (Mouse-ear cress) protein is tRNA wybutosine-synthesizing protein 2/3/4.